The following is a 210-amino-acid chain: Probable septum site-determining protein MinC (210 aa).

It belongs to the MinC family. Interacts with MinD and FtsZ.

Functionally, cell division inhibitor that blocks the formation of polar Z ring septums. Rapidly oscillates between the poles of the cell to destabilize FtsZ filaments that have formed before they mature into polar Z rings. Prevents FtsZ polymerization. In Thermotoga neapolitana (strain ATCC 49049 / DSM 4359 / NBRC 107923 / NS-E), this protein is Probable septum site-determining protein MinC.